Consider the following 333-residue polypeptide: Terpene synthase 2 (333 aa).

A DDxx(x)D/E motif motif is present at residues 82 to 87 (DDDLDT). The short motif at 219–227 (NDCVSYAKE) is the NDxxSxxxD/E motif element.

This sequence belongs to the terpene synthase family.

It catalyses the reaction (2E,6E)-farnesyl diphosphate = (E)-beta-farnesene + diphosphate. The catalysed reaction is (2E,6E)-farnesyl diphosphate = (1S,2S,4R)-beta-elemene + diphosphate. Its function is as follows. Terpene synthase that converts its substrate farnesyl diphosphate (FPP) into the sesquiterpene (E)-beta-farnesene as major product. Is also able to convert FPP into delta-elemene, beta-elemene, (E)-beta-caryophyllene, 9-epi-(E)-caryophyllene, and a yet unidentified sesquiterpene. The protein is Terpene synthase 2 of Dictyostelium purpureum (Slime mold).